A 115-amino-acid polypeptide reads, in one-letter code: Nucleoid-associated protein PMN2A_1347 (115 aa).

The tract at residues 89 to 115 is disordered; the sequence is STSTMKERMEDLTGGFKLNLPGMGEEN.

This sequence belongs to the YbaB/EbfC family. As to quaternary structure, homodimer.

It is found in the cytoplasm. The protein localises to the nucleoid. Functionally, binds to DNA and alters its conformation. May be involved in regulation of gene expression, nucleoid organization and DNA protection. The chain is Nucleoid-associated protein PMN2A_1347 from Prochlorococcus marinus (strain NATL2A).